Here is a 349-residue protein sequence, read N- to C-terminus: S-adenosylmethionine:tRNA ribosyltransferase-isomerase (349 aa).

This sequence belongs to the QueA family. As to quaternary structure, monomer.

It is found in the cytoplasm. It carries out the reaction 7-aminomethyl-7-carbaguanosine(34) in tRNA + S-adenosyl-L-methionine = epoxyqueuosine(34) in tRNA + adenine + L-methionine + 2 H(+). It participates in tRNA modification; tRNA-queuosine biosynthesis. Its function is as follows. Transfers and isomerizes the ribose moiety from AdoMet to the 7-aminomethyl group of 7-deazaguanine (preQ1-tRNA) to give epoxyqueuosine (oQ-tRNA). The protein is S-adenosylmethionine:tRNA ribosyltransferase-isomerase of Pseudomonas putida (strain W619).